The chain runs to 129 residues: Large ribosomal subunit protein uL22 (129 aa).

Belongs to the universal ribosomal protein uL22 family. In terms of assembly, part of the 50S ribosomal subunit.

In terms of biological role, this protein binds specifically to 23S rRNA; its binding is stimulated by other ribosomal proteins, e.g. L4, L17, and L20. It is important during the early stages of 50S assembly. It makes multiple contacts with different domains of the 23S rRNA in the assembled 50S subunit and ribosome. Functionally, the globular domain of the protein is located near the polypeptide exit tunnel on the outside of the subunit, while an extended beta-hairpin is found that lines the wall of the exit tunnel in the center of the 70S ribosome. The protein is Large ribosomal subunit protein uL22 of Bartonella quintana (strain Toulouse) (Rochalimaea quintana).